The following is a 214-amino-acid chain: Glycerol-3-phosphate acyltransferase (214 aa).

Helical transmembrane passes span 4–24, 52–72, 82–102, 118–138, and 159–179; these read LIVA…IVSA, AAIL…WFVV, ETSV…PVFF, LAIN…VAFF, and FLFG…LLVW.

It belongs to the PlsY family. In terms of assembly, probably interacts with PlsX.

Its subcellular location is the cell inner membrane. The enzyme catalyses an acyl phosphate + sn-glycerol 3-phosphate = a 1-acyl-sn-glycero-3-phosphate + phosphate. It participates in lipid metabolism; phospholipid metabolism. In terms of biological role, catalyzes the transfer of an acyl group from acyl-phosphate (acyl-PO(4)) to glycerol-3-phosphate (G3P) to form lysophosphatidic acid (LPA). This enzyme utilizes acyl-phosphate as fatty acyl donor, but not acyl-CoA or acyl-ACP. The sequence is that of Glycerol-3-phosphate acyltransferase from Paraburkholderia phytofirmans (strain DSM 17436 / LMG 22146 / PsJN) (Burkholderia phytofirmans).